Here is a 112-residue protein sequence, read N- to C-terminus: uncharacterized protein (112 aa).

Residues Asn-29 and Asn-60 are each glycosylated (N-linked (GlcNAc...) asparagine; by host). The helical transmembrane segment at 66–86 threads the bilayer; the sequence is IFNGLGFILIVIFIYLLLITL.

Belongs to the asfivirus B117L family.

Its subcellular location is the host membrane. It localises to the virion. This is an uncharacterized protein from Ornithodoros (relapsing fever ticks).